The sequence spans 122 residues: Large ribosomal subunit protein uL14 (122 aa).

This sequence belongs to the universal ribosomal protein uL14 family. As to quaternary structure, part of the 50S ribosomal subunit. Forms a cluster with proteins L3 and L19. In the 70S ribosome, L14 and L19 interact and together make contacts with the 16S rRNA in bridges B5 and B8.

Its function is as follows. Binds to 23S rRNA. Forms part of two intersubunit bridges in the 70S ribosome. This chain is Large ribosomal subunit protein uL14, found in Staphylococcus haemolyticus (strain JCSC1435).